The sequence spans 206 residues: Holliday junction branch migration complex subunit RuvA (206 aa).

A domain I region spans residues 1-62 (MYDYLKGLIT…EDAQVLYGFP (62 aa)). Residues 63 to 141 (NLDQRELFRK…SLLETIELPS (79 aa)) form a domain II region. A flexible linker region spans residues 142-152 (TEDELPLFGVH). The domain III stretch occupies residues 153–206 (PYKHELEEAILALAALGYSEKELEKIRPLLEDNDKLETTDAYMKQALQLLLKLK).

This sequence belongs to the RuvA family. Homotetramer. Forms an RuvA(8)-RuvB(12)-Holliday junction (HJ) complex. HJ DNA is sandwiched between 2 RuvA tetramers; dsDNA enters through RuvA and exits via RuvB. An RuvB hexamer assembles on each DNA strand where it exits the tetramer. Each RuvB hexamer is contacted by two RuvA subunits (via domain III) on 2 adjacent RuvB subunits; this complex drives branch migration. In the full resolvosome a probable DNA-RuvA(4)-RuvB(12)-RuvC(2) complex forms which resolves the HJ.

Its subcellular location is the cytoplasm. Functionally, the RuvA-RuvB-RuvC complex processes Holliday junction (HJ) DNA during genetic recombination and DNA repair, while the RuvA-RuvB complex plays an important role in the rescue of blocked DNA replication forks via replication fork reversal (RFR). RuvA specifically binds to HJ cruciform DNA, conferring on it an open structure. The RuvB hexamer acts as an ATP-dependent pump, pulling dsDNA into and through the RuvAB complex. HJ branch migration allows RuvC to scan DNA until it finds its consensus sequence, where it cleaves and resolves the cruciform DNA. The protein is Holliday junction branch migration complex subunit RuvA of Lysinibacillus sphaericus (strain C3-41).